Consider the following 83-residue polypeptide: Hepcidin-2 (83 aa).

An N-terminal signal peptide occupies residues Met-1–Leu-26. The propeptide occupies Gln-27–Gln-53. 4 disulfide bridges follow: Cys-65-Cys-81, Cys-68-Cys-71, Cys-69-Cys-77, and Cys-72-Cys-80.

Belongs to the hepcidin family. As to expression, highly expressed in the liver and to a much lesser extent in the heart. Also expressed in pancreas.

It is found in the secreted. Its function is as follows. Seems to act as a signaling molecule involved in the maintenance of iron homeostasis. The polypeptide is Hepcidin-2 (Hamp2) (Mus musculus (Mouse)).